The sequence spans 65 residues: Large ribosomal subunit protein bL35 (65 aa).

Basic residues-rich tracts occupy residues 1–15 (MPKMKTKKSASKRFT) and 26–44 (QAFKRHILTKKTTKNKRQL). Residues 1–65 (MPKMKTKKSA…KSVRAMMPYA (65 aa)) are disordered.

This sequence belongs to the bacterial ribosomal protein bL35 family.

This chain is Large ribosomal subunit protein bL35, found in Cupriavidus metallidurans (strain ATCC 43123 / DSM 2839 / NBRC 102507 / CH34) (Ralstonia metallidurans).